Reading from the N-terminus, the 1150-residue chain is ATP-dependent helicase/deoxyribonuclease subunit B (1150 aa).

8 to 15 provides a ligand contact to ATP; the sequence is GRSGSGKS. 4 residues coordinate [4Fe-4S] cluster: C789, C1108, C1111, and C1117.

This sequence belongs to the helicase family. AddB/RexB type 1 subfamily. In terms of assembly, heterodimer of AddA and AddB. Requires Mg(2+) as cofactor. [4Fe-4S] cluster serves as cofactor.

In terms of biological role, the heterodimer acts as both an ATP-dependent DNA helicase and an ATP-dependent, dual-direction single-stranded exonuclease. Recognizes the chi site generating a DNA molecule suitable for the initiation of homologous recombination. The AddB subunit has 5' -&gt; 3' nuclease activity but not helicase activity. This chain is ATP-dependent helicase/deoxyribonuclease subunit B, found in Clostridium tetani (strain Massachusetts / E88).